We begin with the raw amino-acid sequence, 256 residues long: Coiled-coil domain-containing protein 90B, mitochondrial (256 aa).

The N-terminal 42 residues, 1–42, are a transit peptide targeting the mitochondrion; sequence MRNRWIWRFLRPECSGIRWISSPHGRLSPALRRGFLTTTTKS. Positions 106-164 form a coiled coil; that stretch reads AQQEITIQQLMAHLDSIRKDMVILEKSEFANLRAENEKMKIELDQVKQQLINETSRIRA. A helical membrane pass occupies residues 231–253; sequence TIRYLAASVFTCLAIALGFYRFW.

Belongs to the CCDC90 family. In terms of assembly, interacts with MCU.

The protein resides in the mitochondrion membrane. The protein is Coiled-coil domain-containing protein 90B, mitochondrial (Ccdc90b) of Rattus norvegicus (Rat).